The following is a 232-amino-acid chain: Orotate phosphoribosyltransferase (232 aa).

5-phospho-alpha-D-ribose 1-diphosphate is bound by residues R107, K108, K111, and 133–141; that span reads EDLTTDGGS. Residue T137 participates in orotate binding.

Belongs to the purine/pyrimidine phosphoribosyltransferase family. PyrE subfamily. As to quaternary structure, homodimer. It depends on Mg(2+) as a cofactor.

The enzyme catalyses orotidine 5'-phosphate + diphosphate = orotate + 5-phospho-alpha-D-ribose 1-diphosphate. It participates in pyrimidine metabolism; UMP biosynthesis via de novo pathway; UMP from orotate: step 1/2. Its function is as follows. Catalyzes the transfer of a ribosyl phosphate group from 5-phosphoribose 1-diphosphate to orotate, leading to the formation of orotidine monophosphate (OMP). This Cereibacter sphaeroides (strain KD131 / KCTC 12085) (Rhodobacter sphaeroides) protein is Orotate phosphoribosyltransferase.